Here is a 490-residue protein sequence, read N- to C-terminus: Aspartyl/glutamyl-tRNA(Asn/Gln) amidotransferase subunit B (490 aa).

It belongs to the GatB/GatE family. GatB subfamily. Heterotrimer of A, B and C subunits.

It catalyses the reaction L-glutamyl-tRNA(Gln) + L-glutamine + ATP + H2O = L-glutaminyl-tRNA(Gln) + L-glutamate + ADP + phosphate + H(+). The enzyme catalyses L-aspartyl-tRNA(Asn) + L-glutamine + ATP + H2O = L-asparaginyl-tRNA(Asn) + L-glutamate + ADP + phosphate + 2 H(+). In terms of biological role, allows the formation of correctly charged Asn-tRNA(Asn) or Gln-tRNA(Gln) through the transamidation of misacylated Asp-tRNA(Asn) or Glu-tRNA(Gln) in organisms which lack either or both of asparaginyl-tRNA or glutaminyl-tRNA synthetases. The reaction takes place in the presence of glutamine and ATP through an activated phospho-Asp-tRNA(Asn) or phospho-Glu-tRNA(Gln). This is Aspartyl/glutamyl-tRNA(Asn/Gln) amidotransferase subunit B from Methylorubrum extorquens (strain CM4 / NCIMB 13688) (Methylobacterium extorquens).